Consider the following 61-residue polypeptide: Putative antitoxin PYRAB11980 (61 aa).

Belongs to the UPF0165 family.

Its function is as follows. Possibly the antitoxin component of a type II toxin-antitoxin (TA) system. The chain is Putative antitoxin PYRAB11980 from Pyrococcus abyssi (strain GE5 / Orsay).